The following is a 391-amino-acid chain: 3-ketoacyl-CoA thiolase (391 aa).

Cys-95 acts as the Acyl-thioester intermediate in catalysis. Residues His-347 and Cys-377 each act as proton acceptor in the active site.

This sequence belongs to the thiolase-like superfamily. Thiolase family. Heterotetramer of two alpha chains (FadB) and two beta chains (FadA).

It localises to the cytoplasm. The enzyme catalyses an acyl-CoA + acetyl-CoA = a 3-oxoacyl-CoA + CoA. The protein operates within lipid metabolism; fatty acid beta-oxidation. Its function is as follows. Catalyzes the final step of fatty acid oxidation in which acetyl-CoA is released and the CoA ester of a fatty acid two carbons shorter is formed. This is 3-ketoacyl-CoA thiolase from Marinobacter nauticus (strain ATCC 700491 / DSM 11845 / VT8) (Marinobacter aquaeolei).